Consider the following 1192-residue polypeptide: Leucine-rich repeat receptor protein kinase EMS1 (1192 aa).

The first 18 residues, 1–18 (MAFLTALFLFLFFSFSSS), serve as a signal peptide directing secretion. Asn47 carries N-linked (GlcNAc...) asparagine glycosylation. 28 LRR repeats span residues 64–87 (LGRV…EISS), 90–112 (NLRE…IWNL), 114–137 (HLQT…SELP), 138–160 (QLLY…FFIS), 163–185 (ALSS…IGKL), 187–209 (NLSN…IGNI), 235–257 (HLAK…FGEL), 259–281 (NLSI…LGNC), 283–304 (SLKS…ELSE), 330–352 (VLDS…IEDC), 354–376 (MLKH…LCGS), 378–400 (SLEA…FDGC), 402–425 (SLGE…WKLP), 426–447 (LMAL…LWKS), 449–471 (NLME…IGNA), 473–496 (SLKR…GKLT), 497–520 (SLSV…GDCT), 521–543 (SLTT…ITAL), 545–567 (QLQC…PSAY), 581–603 (HHGI…LGEC), 605–628 (VLVE…SRLT), 629–651 (NLTI…MGNS), 653–675 (KLQG…FGLL), 677–697 (SLVK…ASLG), 701–723 (ELTH…LSTM), 725–748 (KLVG…GNLT), 749–772 (QLEY…CGLP), and 773–795 (NLEF…GVCQ). Asn171, Asn187, and Asn208 each carry an N-linked (GlcNAc...) asparagine glycan. An N-linked (GlcNAc...) asparagine glycan is attached at Asn259. Asn414 and Asn435 each carry an N-linked (GlcNAc...) asparagine glycan. N-linked (GlcNAc...) asparagine glycosylation occurs at Asn555. An N-linked (GlcNAc...) asparagine glycan is attached at Asn629. N-linked (GlcNAc...) asparagine glycans are attached at residues Asn682, Asn711, and Asn746. Residues 828–848 (WGIAGLMLGFTIIVFVFVFSL) traverse the membrane as a helical segment. At Thr914 the chain carries Phosphothreonine. Residues 917-1192 (FSKKNIIGDG…LDVLKALKEI (276 aa)) form the Protein kinase domain. ATP contacts are provided by residues 923 to 931 (IGDGGFGTV) and Lys945. Tyr990 is subject to Phosphotyrosine. Residue Asp1043 is the Proton acceptor of the active site. Phosphotyrosine is present on Tyr1085.

This sequence belongs to the protein kinase superfamily. Ser/Thr protein kinase family. As to quaternary structure, interacts with TPD1. In terms of processing, autophosphorylates in vitro. In terms of tissue distribution, present in young buds, open flowers and siliques but absent from mature leaves and roots. Strongly expressed in the young organ primordia, and as the anthers and ovules developed, became focused in the microsporangia and in the distal and chalazal regions of the ovule. In cv. Landsberg erecta, only expressed in the anthers of young floral buds.

Its subcellular location is the cell membrane. The enzyme catalyses L-seryl-[protein] + ATP = O-phospho-L-seryl-[protein] + ADP + H(+). The catalysed reaction is L-threonyl-[protein] + ATP = O-phospho-L-threonyl-[protein] + ADP + H(+). Its function is as follows. Receptor with a serine/threonine-protein kinase activity required for the specification of the correct number of male archesporial initials and for the subsequent specification of tapetal and middle cell layer identities. In seeds, required for enhancing cell size and the rate of embryonic development. The protein is Leucine-rich repeat receptor protein kinase EMS1 of Arabidopsis thaliana (Mouse-ear cress).